We begin with the raw amino-acid sequence, 170 residues long: Small ribosomal subunit protein mS25 (170 aa).

It belongs to the mitochondrion-specific ribosomal protein mS25 family. Component of the mitochondrial ribosome small subunit (28S) which comprises a 12S rRNA and about 30 distinct proteins.

Its subcellular location is the mitochondrion. This Caenorhabditis elegans protein is Small ribosomal subunit protein mS25 (mrps-25).